A 173-amino-acid polypeptide reads, in one-letter code: Small ribosomal subunit protein uS5 (173 aa).

One can recognise an S5 DRBM domain in the interval leucine 16–valine 79.

Belongs to the universal ribosomal protein uS5 family. Part of the 30S ribosomal subunit. Contacts proteins S4 and S8.

Functionally, with S4 and S12 plays an important role in translational accuracy. Its function is as follows. Located at the back of the 30S subunit body where it stabilizes the conformation of the head with respect to the body. The protein is Small ribosomal subunit protein uS5 of Anaplasma phagocytophilum (strain HZ).